We begin with the raw amino-acid sequence, 386 residues long: Ribosomal RNA small subunit methyltransferase H (386 aa).

S-adenosyl-L-methionine is bound by residues 97–99 (GGH), Asp-116, Tyr-143, Asp-167, and Gln-174.

It belongs to the methyltransferase superfamily. RsmH family.

The protein resides in the cytoplasm. It catalyses the reaction cytidine(1402) in 16S rRNA + S-adenosyl-L-methionine = N(4)-methylcytidine(1402) in 16S rRNA + S-adenosyl-L-homocysteine + H(+). Functionally, specifically methylates the N4 position of cytidine in position 1402 (C1402) of 16S rRNA. The polypeptide is Ribosomal RNA small subunit methyltransferase H (Mycobacterium avium (strain 104)).